The chain runs to 252 residues: Probable transcriptional regulatory protein Lxx10750 (252 aa).

Belongs to the TACO1 family.

It is found in the cytoplasm. The chain is Probable transcriptional regulatory protein Lxx10750 from Leifsonia xyli subsp. xyli (strain CTCB07).